The sequence spans 311 residues: tRNA-cytidine(32) 2-sulfurtransferase (311 aa).

The disordered stretch occupies residues 18-38 (KVGADHGPSEENGSSHPLFDN). Positions 77–82 (SGGKDS) match the PP-loop motif motif. [4Fe-4S] cluster contacts are provided by cysteine 152, cysteine 155, and cysteine 243.

This sequence belongs to the TtcA family. Homodimer. It depends on Mg(2+) as a cofactor. The cofactor is [4Fe-4S] cluster.

The protein localises to the cytoplasm. The enzyme catalyses cytidine(32) in tRNA + S-sulfanyl-L-cysteinyl-[cysteine desulfurase] + AH2 + ATP = 2-thiocytidine(32) in tRNA + L-cysteinyl-[cysteine desulfurase] + A + AMP + diphosphate + H(+). It participates in tRNA modification. In terms of biological role, catalyzes the ATP-dependent 2-thiolation of cytidine in position 32 of tRNA, to form 2-thiocytidine (s(2)C32). The sulfur atoms are provided by the cysteine/cysteine desulfurase (IscS) system. The chain is tRNA-cytidine(32) 2-sulfurtransferase from Agrobacterium fabrum (strain C58 / ATCC 33970) (Agrobacterium tumefaciens (strain C58)).